A 252-amino-acid chain; its full sequence is Fructose-1,6-bisphosphatase/inositol-1-monophosphatase (252 aa).

Residues glutamate 65, aspartate 81, isoleucine 83, and aspartate 84 each contribute to the Mg(2+) site. Substrate contacts are provided by residues 84–86 (DGS), arginine 170, phenylalanine 175, and arginine 194. Position 201 (aspartate 201) interacts with Mg(2+).

This sequence belongs to the inositol monophosphatase superfamily. FBPase class 4 family. Homodimer. Mg(2+) is required as a cofactor.

The enzyme catalyses beta-D-fructose 1,6-bisphosphate + H2O = beta-D-fructose 6-phosphate + phosphate. The catalysed reaction is a myo-inositol phosphate + H2O = myo-inositol + phosphate. IMPase activity is inhibited by Ca(2+) and Zn(2+). In contrast to mammalian I-1-P phosphatases, is not inhibited by Li(+) up to 100 mM. Phosphatase with broad specificity; it can dephosphorylate fructose 1,6-bisphosphate, both D and L isomers of inositol-1-phosphate (I-1-P), 2'-AMP, pNPP, beta-glycerol phosphate, and alpha-D-glucose-1-phosphate. Cannot hydrolyze glucose-6-phosphate, fructose-6-phosphate, NAD(+) or 5'-AMP. May be involved in the biosynthesis of a unique osmolyte, di-myo-inositol 1,1-phosphate. In Methanocaldococcus jannaschii (strain ATCC 43067 / DSM 2661 / JAL-1 / JCM 10045 / NBRC 100440) (Methanococcus jannaschii), this protein is Fructose-1,6-bisphosphatase/inositol-1-monophosphatase (suhB).